The primary structure comprises 433 residues: Glutamate-1-semialdehyde 2,1-aminomutase (433 aa).

Lys269 carries the post-translational modification N6-(pyridoxal phosphate)lysine.

Belongs to the class-III pyridoxal-phosphate-dependent aminotransferase family. HemL subfamily. As to quaternary structure, homodimer. Requires pyridoxal 5'-phosphate as cofactor.

The protein localises to the cytoplasm. It carries out the reaction (S)-4-amino-5-oxopentanoate = 5-aminolevulinate. Its pathway is porphyrin-containing compound metabolism; protoporphyrin-IX biosynthesis; 5-aminolevulinate from L-glutamyl-tRNA(Glu): step 2/2. This is Glutamate-1-semialdehyde 2,1-aminomutase from Francisella philomiragia subsp. philomiragia (strain ATCC 25017 / CCUG 19701 / FSC 153 / O#319-036).